Consider the following 191-residue polypeptide: Holliday junction branch migration complex subunit RuvA (191 aa).

The segment at 1–63 (MIRYLRGLVL…EEGLSLYGFP (63 aa)) is domain I. The tract at residues 64–136 (DEENLALFEL…LKGKVPPHLL (73 aa)) is domain II. The segment at 136–140 (LAGEK) is flexible linker. Positions 141-191 (VESEAAEEAVMALAALGFKEAQARAVVLDLLAQNPKARAQDLIKEALKRLR) are domain III.

Belongs to the RuvA family. In terms of assembly, homotetramer. Forms an RuvA(8)-RuvB(12)-Holliday junction (HJ) complex. HJ DNA is sandwiched between 2 RuvA tetramers; dsDNA enters through RuvA and exits via RuvB. An RuvB hexamer assembles on each DNA strand where it exits the tetramer. Each RuvB hexamer is contacted by two RuvA subunits (via domain III) on 2 adjacent RuvB subunits; this complex drives branch migration. In the full resolvosome a probable DNA-RuvA(4)-RuvB(12)-RuvC(2) complex forms which resolves the HJ.

Its subcellular location is the cytoplasm. Its function is as follows. The RuvA-RuvB-RuvC complex processes Holliday junction (HJ) DNA during genetic recombination and DNA repair, while the RuvA-RuvB complex plays an important role in the rescue of blocked DNA replication forks via replication fork reversal (RFR). RuvA specifically binds to HJ cruciform DNA, conferring on it an open structure. The RuvB hexamer acts as an ATP-dependent pump, pulling dsDNA into and through the RuvAB complex. HJ branch migration allows RuvC to scan DNA until it finds its consensus sequence, where it cleaves and resolves the cruciform DNA. This chain is Holliday junction branch migration complex subunit RuvA, found in Thermus thermophilus (strain ATCC BAA-163 / DSM 7039 / HB27).